The following is a 178-amino-acid chain: MNPFHDLEPGPNVPEVVYALIEIPKGSRNKYELDKKTGLLKLDRVLYSPFFYPVDYGIIPRTWYDDDDPFDIMVIMREPTYPLTIIEARPIGLFKMIDSGDKDYKVLAVPVEDPYFKDWKDIDDVPKAFLDEIAHFFKRYKELQGKEIIVEGWEGAEAAKREILRAIELYKEKFGSKE.

Substrate contacts are provided by lysine 30, arginine 44, and tyrosine 56. Aspartate 66, aspartate 71, and aspartate 103 together coordinate Mg(2+). Tyrosine 140 contacts substrate.

It belongs to the PPase family. Homohexamer. Requires Mg(2+) as cofactor.

Its subcellular location is the cytoplasm. The catalysed reaction is diphosphate + H2O = 2 phosphate + H(+). Its function is as follows. Catalyzes the hydrolysis of inorganic pyrophosphate (PPi) forming two phosphate ions. This is Inorganic pyrophosphatase from Pyrococcus abyssi (strain GE5 / Orsay).